The chain runs to 333 residues: Transcription factor MYB94 (333 aa).

HTH myb-type domains follow at residues 9–65 (KIGV…RPGI) and 66–116 (KRGN…KKKL). 2 consecutive DNA-binding regions (H-T-H motif) follow at residues 37–61 (WRSVPTHTGLRRCSKSCRLRWTNYL) and 89–112 (WAAIASYLPERTDNDIKNYWNTHL). The segment covering 134–154 (KDFSISNKNTTSHQSSNSSKG) has biased composition (polar residues). Disordered regions lie at residues 134–157 (KDFSISNKNTTSHQSSNSSKGQWE) and 183–218 (PTNFSIPDLGYGPSSSSSSTTTTTTTTRNTNPYPSG). A compositionally biased stretch (low complexity) spans 196 to 209 (SSSSSSTTTTTTTT).

As to expression, expressed in germinating seeds, rosette and cauline leaves, flower buds, open flowers, stems and developing siliques.

The protein resides in the nucleus. Functionally, transcription activator involved in the activation of cuticular wax biosynthesis under drought stress. Binds directly to the promoters of genes involved in cuticular wax biosynthesis. Transactivates WSD1, KCS2/DAISY, CER1, CER2, FAR3 and ECR genes. Functions together with MYB96 in the activation of cuticular wax biosynthesis. The polypeptide is Transcription factor MYB94 (Arabidopsis thaliana (Mouse-ear cress)).